Here is a 181-residue protein sequence, read N- to C-terminus: Small ribosomal subunit protein uS4 (181 aa).

The region spanning 104 to 166 is the S4 RNA-binding domain; it reads RRLQTIVYKK…VTSSFKSRPP (63 aa).

Belongs to the universal ribosomal protein uS4 family. As to quaternary structure, part of the 30S ribosomal subunit. Contacts protein S5. The interaction surface between S4 and S5 is involved in control of translational fidelity.

Its function is as follows. One of the primary rRNA binding proteins, it binds directly to 16S rRNA where it nucleates assembly of the body of the 30S subunit. With S5 and S12 plays an important role in translational accuracy. In Saccharolobus islandicus (strain Y.N.15.51 / Yellowstone #2) (Sulfolobus islandicus), this protein is Small ribosomal subunit protein uS4.